The sequence spans 172 residues: Chorion protein S18 (172 aa).

The first 17 residues, 1 to 17, serve as a signal peptide directing secretion; that stretch reads MMKFMCICLCAISAVSA.

The protein belongs to the chorion protein S15/S18 family.

It is found in the secreted. Functionally, chorion membrane (egg shell) protein; plays a role in protecting the egg from the environment. The chain is Chorion protein S18 (Cp18) from Drosophila melanogaster (Fruit fly).